Here is a 102-residue protein sequence, read N- to C-terminus: uncharacterized protein (102 aa).

This is an uncharacterized protein from Methanocaldococcus jannaschii (strain ATCC 43067 / DSM 2661 / JAL-1 / JCM 10045 / NBRC 100440) (Methanococcus jannaschii).